A 102-amino-acid chain; its full sequence is Large ribosomal subunit protein uL24 (102 aa).

It belongs to the universal ribosomal protein uL24 family. Part of the 50S ribosomal subunit.

Its function is as follows. One of two assembly initiator proteins, it binds directly to the 5'-end of the 23S rRNA, where it nucleates assembly of the 50S subunit. One of the proteins that surrounds the polypeptide exit tunnel on the outside of the subunit. This is Large ribosomal subunit protein uL24 from Cupriavidus metallidurans (strain ATCC 43123 / DSM 2839 / NBRC 102507 / CH34) (Ralstonia metallidurans).